The chain runs to 732 residues: DNA gyrase subunit B, mitochondrial (732 aa).

The Toprim domain maps to 513 to 620 (SEIFIVEGDS…RYQRALFDAG (108 aa)). 3 residues coordinate Mg(2+): Glu-519, Asp-593, and Asp-595.

Belongs to the type II topoisomerase GyrB family. In terms of assembly, made up of two chains. The A chain is responsible for DNA breakage and rejoining; the B chain catalyzes ATP hydrolysis. The cofactor is Mg(2+). Mn(2+) is required as a cofactor. It depends on Ca(2+) as a cofactor.

Its subcellular location is the mitochondrion. It carries out the reaction ATP-dependent breakage, passage and rejoining of double-stranded DNA.. A type II topoisomerase that negatively supercoils closed circular double-stranded DNA in an ATP-dependent manner. The polypeptide is DNA gyrase subunit B, mitochondrial (GYRBM) (Arabidopsis thaliana (Mouse-ear cress)).